The chain runs to 225 residues: Single-pass membrane and coiled-coil domain-containing protein 3 (225 aa).

Positions 62–92 form a coiled coil; that stretch reads IKENCDLIIQAIMKIQKELQKVDEALKDKLE. Residues 155-175 traverse the membrane as a helical segment; it reads IGASLLGSIGVAVLGLGIDMI. The stretch at 183 to 207 forms a coiled coil; it reads VEKTQLQAAIKSYEKHLVEFKSASE.

The protein resides in the membrane. This is Single-pass membrane and coiled-coil domain-containing protein 3 (SMCO3) from Homo sapiens (Human).